We begin with the raw amino-acid sequence, 108 residues long: Virulence-associated protein I (108 aa).

The region spanning 19-74 is the HTH cro/C1-type domain; that stretch reads LREEYLKPMGLSAHALAKALHVSPSRINEIVREQRGITADTALRLVRYFGGDAQSW. Positions 30-49 form a DNA-binding region, H-T-H motif; that stretch reads SAHALAKALHVSPSRINEIV.

The protein belongs to the VapA/VapI family.

The chain is Virulence-associated protein I (vapI) from Dichelobacter nodosus (Bacteroides nodosus).